A 566-amino-acid chain; its full sequence is NAD-dependent malic enzyme 3 (566 aa).

Tyr-105 serves as the catalytic Proton donor. The active-site Proton acceptor is the Lys-178. A divalent metal cation is bound by residues Glu-249, Asp-250, and Asp-273. Residues Ala-306 to Ala-309, Asn-423, and Asn-468 contribute to the NAD(+) site.

This sequence belongs to the malic enzymes family. It depends on Mg(2+) as a cofactor. Mn(2+) serves as cofactor.

The catalysed reaction is (S)-malate + NAD(+) = pyruvate + CO2 + NADH. It catalyses the reaction oxaloacetate + H(+) = pyruvate + CO2. Catalyzes the decarboxylation of malate to pyruvate. Can use NAD and NADP, but with a strong preference for NAD. Can also catalyze the decarboxylation of oxaloacetate. Involved in keeping the ATP levels high. This Bacillus subtilis (strain 168) protein is NAD-dependent malic enzyme 3 (malS).